An 868-amino-acid chain; its full sequence is Translation initiation factor IF-2 (868 aa).

2 disordered regions span residues 49–72 (LSKQ…TSTL) and 92–276 (KRSD…EHLK). Residues 92 to 240 (KRSDIEEQQR…KKAEAEEVHL (149 aa)) are compositionally biased toward basic and acidic residues. In terms of domain architecture, tr-type G spans 368-537 (SRAPVVTIMG…VLQSELLDLQ (170 aa)). Residues 377–384 (GHVDHGKT) form a G1 region. 377 to 384 (GHVDHGKT) provides a ligand contact to GTP. The segment at 402–406 (GITQH) is G2. Residues 423–426 (DTPG) form a G3 region. GTP contacts are provided by residues 423-427 (DTPGH) and 477-480 (NKMD). Residues 477 to 480 (NKMD) are G4. A G5 region spans residues 513-515 (SAK).

It belongs to the TRAFAC class translation factor GTPase superfamily. Classic translation factor GTPase family. IF-2 subfamily.

The protein resides in the cytoplasm. Its function is as follows. One of the essential components for the initiation of protein synthesis. Protects formylmethionyl-tRNA from spontaneous hydrolysis and promotes its binding to the 30S ribosomal subunits. Also involved in the hydrolysis of GTP during the formation of the 70S ribosomal complex. This chain is Translation initiation factor IF-2, found in Alteromonas mediterranea (strain DSM 17117 / CIP 110805 / LMG 28347 / Deep ecotype).